The chain runs to 658 residues: MTQLAIGEATPHGATYDGHGVNFTLFSAHAERVELCVFDSRGNERRYDLPGRRGDVWHGYLAGARPGLRYGYRVHGPWQPAQGHRFNPAKLLLDPYARRVEGELKDHPLLHGGHDEPDYRDNAAVAPKSVVISDHYDWEDDAAPRTPWGKTVIYEAHVKGLTYLHPELPQEIRGTYKALGHPVMVAYFKQLGITALELLPVAQFASEPRLQRMGLTNYWGYNPMAMFALHSAWASSPEMALDEFRDAVKALHRAGIEVILDIVLNHSAELDLDGPTFSLRGIDNRSYYWIRDDGDYHNWTGCGNTLNLSHPGVVEYACECLRYWVETCHVDGFRFDLASVMGRTPTFRQDAPLFAAIKACPVLSTVKLIAEPWDIGEGGYQVGNFPPPFAEWNDHFRDAARRFWLPRNLTTGEFACRFAASSDVFKRNGRAPGASVNLLTAHDGFTLRDCVCFNQKHNEANGEENRDGTNSNYSDNHGKEGLGGPLDLMERRRDSIHALLATLLLSQGTPMLLAGDEHGHSQHGNNNAYCQDNALTWLDWQQANRGLTTFTAALIRLRQQIPALTGNSWWEEGDGNVRWLNKNAQPLSADEWQNGPKLMQILLSDRFLIAINATLEVTDIVLPEGEWRAVPPFAGEDNPVITAVWQGPAHGLCVFQRG.

Asp-336 serves as the catalytic Nucleophile. Catalysis depends on Glu-371, which acts as the Proton donor. The segment at 459–484 (EANGEENRDGTNSNYSDNHGKEGLGG) is disordered.

Belongs to the glycosyl hydrolase 13 family.

It carries out the reaction Hydrolysis of (1-&gt;6)-alpha-D-glucosidic linkages to branches with degrees of polymerization of three or four glucose residues in limit dextrin.. It participates in glycan degradation; glycogen degradation. Removes maltotriose and maltotetraose chains that are attached by 1,6-alpha-linkage to the limit dextrin main chain, generating a debranched limit dextrin. The protein is Glycogen debranching enzyme of Salmonella paratyphi B (strain ATCC BAA-1250 / SPB7).